The primary structure comprises 333 residues: uncharacterized protein (333 aa).

This is an uncharacterized protein from Mycolicibacterium smegmatis (Mycobacterium smegmatis).